Consider the following 407-residue polypeptide: MELLEEDLTCPICCSLFDDPRVLPCSHNFCKKCLEGLLEGNVRNSLWRPSPFKCPTCRKETSATGVNSLQVNYSLKGIVEKYNKIKISPKMPVCKGHLGQPLNIFCVTDMQLICGICATRGEHTKHVFSSIEDAYAREKNAFESLFQSFETWRRGDALSRLDTLETNKRKALQLLTKDSDKVKEFFEKLQHTLDQKKNEILSDFETMKLAVMQTYDPEINKINTILQEQRMAFNIAEAFKDVSEPIIFLQQMQEFREKIKVIKETPLPHSNLPTSPLMKNFDTSQWGDIKLVDVDKLSLPQDTGVFTSKIPWYPYLLLMMVVLLGLLIFFGPTVFLEWSPLDELATWKDYLSSFNSYLTKSADFIEQSVFYWEQMTDGFFIFGERVKNVSLVALNNVAEFICKYKLL.

The RING-type zinc finger occupies 10 to 58 (CPICCSLFDDPRVLPCSHNFCKKCLEGLLEGNVRNSLWRPSPFKCPTCR). The B box-type zinc finger occupies 89–131 (PKMPVCKGHLGQPLNIFCVTDMQLICGICATRGEHTKHVFSSI). Residues Cys-94, His-97, Cys-117, and His-123 each contribute to the Zn(2+) site. The stretch at 172–200 (LQLLTKDSDKVKEFFEKLQHTLDQKKNEI) forms a coiled coil. Residues 316–336 (LLLMMVVLLGLLIFFGPTVFL) traverse the membrane as a helical segment.

This sequence belongs to the TRIM/RBCC family. As to quaternary structure, interacts (via C-terminal domain) with VCP. Interacts with AKT1; the interaction ubiquitinates AKT1 and leads to its proteasomal degradation. Interacts with MDM2; the interaction ubiquitinates AKT1 and leads to its proteasomal degradation. Interacts with p62/SQSTM1. Interacts with TRAF6. Interacts with IKBKG/NEMO. Post-translationally, auto-ubiquitinated; requires the RING-type zinc finger. Auto-polyubiquitination leads to proteasomal degradation.

Its subcellular location is the endoplasmic reticulum membrane. The catalysed reaction is S-ubiquitinyl-[E2 ubiquitin-conjugating enzyme]-L-cysteine + [acceptor protein]-L-lysine = [E2 ubiquitin-conjugating enzyme]-L-cysteine + N(6)-ubiquitinyl-[acceptor protein]-L-lysine.. It functions in the pathway protein modification; protein ubiquitination. Endoplasmic reticulum (ER) membrane anchored E3 ligase involved in the retrotranslocation and turnover of membrane and secretory proteins from the ER through a set of processes named ER-associated degradation (ERAD). This process acts on misfolded proteins as well as in the regulated degradation of correctly folded proteins. Enhances ionizing radiation-induced p53/TP53 stability and apoptosis via ubiquitinating MDM2 and AKT1 and decreasing AKT1 kinase activity through MDM2 and AKT1 proteasomal degradation. Regulates ER stress-induced autophagy, and may act as a tumor suppressor. Also plays a role in innate immune response by stimulating NF-kappa-B activity in the TLR2 signaling pathway. Ubiquitinates TRAF6 via the 'Lys-29'-linked polyubiquitination chain resulting in NF-kappa-B activation. Participates as well in T-cell receptor-mediated NF-kappa-B activation. In the presence of TNF, modulates the IKK complex by regulating IKBKG/NEMO ubiquitination leading to the repression of NF-kappa-B. The chain is E3 ubiquitin-protein ligase TRIM13 (Trim13) from Mus musculus (Mouse).